The primary structure comprises 347 residues: Palmitoyltransferase ZDHHC19 (347 aa).

Helical transmembrane passes span 29-49 and 59-79; these read VFAAFNVTLLLFLSGLFFGFP and WAFPAITGPLFILTFFSLVSL. A DHHC domain is found at 112–162; sequence EWCPKCLFHRPPRTYHCPWCNICVEDFDHHCKWVNNCIGHRNFRLFMLLVL. Residue Cys-142 is the S-palmitoyl cysteine intermediate of the active site. Transmembrane regions (helical) follow at residues 156 to 176 and 194 to 214; these read LFMLLVLSLCLYSGALLVTCL and AILVAVPAAGFLIPLFLLLLI. The segment at 275–347 is disordered; that stretch reads IQEKTKPSPP…PTAEPAAGDP (73 aa).

Belongs to the DHHC palmitoyltransferase family.

The protein resides in the golgi apparatus membrane. The protein localises to the cytoplasm. It is found in the perinuclear region. It catalyses the reaction L-cysteinyl-[protein] + hexadecanoyl-CoA = S-hexadecanoyl-L-cysteinyl-[protein] + CoA. Functionally, palmitoyltransferase that mediates palmitoylation oproteins, such as RRAS and SQSTM1. Catalyzes palmitoylation of RRAS, leading to increased cell viability. Acts as a positive regulator of autophagy by mediating palmitoylation of SQSTM1, promoting affinity between SQSTM1 and ATG8 proteins and recruitment of ubiquitinated cargo proteins to autophagosomes. The sequence is that of Palmitoyltransferase ZDHHC19 (Zdhhc19) from Mus musculus (Mouse).